Here is a 241-residue protein sequence, read N- to C-terminus: tRNA (guanine-N(1)-)-methyltransferase (241 aa).

S-adenosyl-L-methionine-binding positions include G108 and 127–132; that span reads LGDYVL.

It belongs to the RNA methyltransferase TrmD family. As to quaternary structure, homodimer.

The protein resides in the cytoplasm. It carries out the reaction guanosine(37) in tRNA + S-adenosyl-L-methionine = N(1)-methylguanosine(37) in tRNA + S-adenosyl-L-homocysteine + H(+). Functionally, specifically methylates guanosine-37 in various tRNAs. In Streptococcus suis (strain 98HAH33), this protein is tRNA (guanine-N(1)-)-methyltransferase.